The sequence spans 316 residues: Methionyl-tRNA formyltransferase (316 aa).

Position 109–112 (Ser109–Pro112) interacts with (6S)-5,6,7,8-tetrahydrofolate.

This sequence belongs to the Fmt family.

It catalyses the reaction L-methionyl-tRNA(fMet) + (6R)-10-formyltetrahydrofolate = N-formyl-L-methionyl-tRNA(fMet) + (6S)-5,6,7,8-tetrahydrofolate + H(+). Its function is as follows. Attaches a formyl group to the free amino group of methionyl-tRNA(fMet). The formyl group appears to play a dual role in the initiator identity of N-formylmethionyl-tRNA by promoting its recognition by IF2 and preventing the misappropriation of this tRNA by the elongation apparatus. In Idiomarina loihiensis (strain ATCC BAA-735 / DSM 15497 / L2-TR), this protein is Methionyl-tRNA formyltransferase.